A 152-amino-acid polypeptide reads, in one-letter code: Protein ripply3 (152 aa).

Over residues 1–24 (MRPEAAGVREARGRLCHCPGDDPG) the composition is skewed to basic and acidic residues. 2 disordered regions span residues 1–76 (MRPE…GAFG) and 113–152 (FYND…ERAE). The WRPW motif signature appears at 40-43 (WRPW). The segment at 79–114 (HPVRLYLPVSKRQEYLQSSGEKVLASFPVQATIHFY) is ripply homology domain. Over residues 116–130 (DDSESGSEEEQEEEA) the composition is skewed to acidic residues. The segment covering 140–152 (AEVRDSAQEERAE) has biased composition (basic and acidic residues).

This sequence belongs to the ripply family. As to quaternary structure, interacts with TBX1.

Its subcellular location is the nucleus. Acts as a transcriptional corepressor. Negative regulator of the transcriptional activity of TBX1. Plays a role in the development of the pharyngeal apparatus and derivatives. The protein is Protein ripply3 (Ripply3) of Mus musculus (Mouse).